The sequence spans 23 residues: Cardioactive peptide CAP23 (23 aa).

Cysteines 7 and 19 form a disulfide.

Belongs to the GBP/PSP1/paralytic peptide family.

Functionally, has excitatory effects on a semi-isolated heart from larval Manduca sexta, causing an inotropic effect at low concentrations of peptide and chronotropic and inotropic effects at high doses. The protein is Cardioactive peptide CAP23 of Spodoptera eridania (Southern armyworm).